A 255-amino-acid chain; its full sequence is tRNA pseudouridine synthase B (255 aa).

Asp52 (nucleophile) is an active-site residue. The substrate site is built by Tyr80, Tyr183, and Leu204.

This sequence belongs to the pseudouridine synthase TruB family. Type 1 subfamily.

The enzyme catalyses uridine(55) in tRNA = pseudouridine(55) in tRNA. Its function is as follows. Responsible for synthesis of pseudouridine from uracil-55 in the psi GC loop of transfer RNAs. This chain is tRNA pseudouridine synthase B, found in Blochmanniella floridana.